A 423-amino-acid chain; its full sequence is Ankyrin repeat and SAM domain-containing protein 4B (423 aa).

The mediates localization to microvilli stretch occupies residues 1–251; sequence MSTRYHQAAS…PKDFKEKLHF (251 aa). ANK repeat units lie at residues 31–60, 64–93, and 97–126; these read DGMTPTLLAAYHGNLEALEIICSRGGDPDK, WGNTPLHYAASNGHTHCISFLVNFGANIFA, and DLKSPLDAAASREQKECVALLDKAATVQNT. Residues 130 to 169 are a coiled coil; that stretch reads KRVTRLKEQALKNARKQMKECERLQERHQNKMARTYSKED. 3 disordered regions span residues 158–181, 207–227, and 303–335; these read QNKMARTYSKEDSGTISSSHSTLS, KSKKNKDTTEQLEKDGRSGQR, and QRQGAAGTVEEEEEEEEEEEEEKREANGTAGDL. Positions 171–181 are enriched in low complexity; that stretch reads GTISSSHSTLS. A compositionally biased stretch (basic and acidic residues) spans 207 to 224; the sequence is KSKKNKDTTEQLEKDGRS. The interval 253–352 is mediates interaction with MYO7B; sequence VEEDDDVQHE…EWEEDAVDAT (100 aa). Residues 301–335 are a coiled coil; it reads LFQRQGAAGTVEEEEEEEEEEEEEKREANGTAGDL. Over residues 311 to 324 the composition is skewed to acidic residues; it reads VEEEEEEEEEEEEE. The SAM domain maps to 357–409; that stretch reads FLQSQHLEEFLPIFMREQIDLEALLLCSDEDLQNIHMQLGPRKKVLSAIDKRK. Residues 421–423 carry the PDZ-binding; mediates interaction with USH1C motif; the sequence is TSL.

As to quaternary structure, part of the IMAC/intermicrovillar adhesion complex/intermicrovillar tip-link complex composed of ANKS4B, MYO7B, USH1C, CDHR2 and CDHR5. Interacts with USH1C; the interaction is direct and is required for ANKS4B localization to the tip of microvilli. Interacts with MYO7B; the interaction is direct. May interact with HSPA5. Cochlea, kidney, lung, liver, pancreas, salivary gland and small intestine (at protein level). Expressed in kidney, small intestine, pancreas, liver and colon. Not detected in heart, spleen and brain.

The protein localises to the cell projection. Its subcellular location is the microvillus. As part of the intermicrovillar adhesion complex/IMAC plays a role in epithelial brush border differentiation, controlling microvilli organization and length. Plays a role in assembly of the complex. May play a role in cellular response to endoplasmic reticulum stress. This chain is Ankyrin repeat and SAM domain-containing protein 4B, found in Mus musculus (Mouse).